Reading from the N-terminus, the 147-residue chain is MRALIQRVLEAKVVVDGETTGEIQHGLLVFLGIGREDTLATGQKLIDKILKYRIFDDEQGKMGWNVSQANGGILLVSQFTLMAQTQKGLRPDFGPAMPPSDAKALYEQLVEYTRSQFENVQTGVFAADMKVHLINDGPVTFNLEVEA.

Positions 137–138 (GP) match the Gly-cisPro motif, important for rejection of L-amino acids motif.

This sequence belongs to the DTD family. As to quaternary structure, homodimer.

It is found in the cytoplasm. The enzyme catalyses glycyl-tRNA(Ala) + H2O = tRNA(Ala) + glycine + H(+). It carries out the reaction a D-aminoacyl-tRNA + H2O = a tRNA + a D-alpha-amino acid + H(+). Its function is as follows. An aminoacyl-tRNA editing enzyme that deacylates mischarged D-aminoacyl-tRNAs. Also deacylates mischarged glycyl-tRNA(Ala), protecting cells against glycine mischarging by AlaRS. Acts via tRNA-based rather than protein-based catalysis; rejects L-amino acids rather than detecting D-amino acids in the active site. By recycling D-aminoacyl-tRNA to D-amino acids and free tRNA molecules, this enzyme counteracts the toxicity associated with the formation of D-aminoacyl-tRNA entities in vivo and helps enforce protein L-homochirality. This is D-aminoacyl-tRNA deacylase from Acinetobacter baumannii (strain AYE).